The chain runs to 425 residues: Stabilizer of axonemal microtubules 4 (425 aa).

Disordered stretches follow at residues 93–126, 203–225, and 316–335; these read PLEVPDGKHPLPWSMRQTSSGYGREKPSAGPPTK, EGSGFTKQSHQSPIVFQPPSQAL, and KEPTGFSLNNPMYVRSPCDP. A compositionally biased stretch (polar residues) spans 207–222; that stretch reads FTKQSHQSPIVFQPPS.

Microtubule inner protein component of sperm flagellar doublet microtubules. Interacts with PPP1CA.

The protein localises to the cell projection. It is found in the cilium. The protein resides in the cytoplasm. Its subcellular location is the cytoskeleton. It localises to the flagellum axoneme. The protein is Stabilizer of axonemal microtubules 4 of Homo sapiens (Human).